A 59-amino-acid chain; its full sequence is MRIMKFFKDVGKEMKKVSWPKGKELTRYTITVISTVIFFVIFFALLDTGISQLIRLIVE.

The chain crosses the membrane as a helical span at residues 30-50 (ITVISTVIFFVIFFALLDTGI).

This sequence belongs to the SecE/SEC61-gamma family. As to quaternary structure, component of the Sec protein translocase complex. Heterotrimer consisting of SecY, SecE and SecG subunits. The heterotrimers can form oligomers, although 1 heterotrimer is thought to be able to translocate proteins. Interacts with the ribosome. Interacts with SecDF, and other proteins may be involved. Interacts with SecA.

It is found in the cell membrane. In terms of biological role, essential subunit of the Sec protein translocation channel SecYEG. Clamps together the 2 halves of SecY. May contact the channel plug during translocation. The sequence is that of Protein translocase subunit SecE from Bacillus subtilis (strain 168).